The following is a 435-amino-acid chain: tRNA modification GTPase MnmE (435 aa).

R24, E82, and K122 together coordinate (6S)-5-formyl-5,6,7,8-tetrahydrofolate. The TrmE-type G domain maps to 219-360 (GFIIAIAGPP…LIAEMERRLG (142 aa)). N229 is a K(+) binding site. Residues 229 to 234 (NAGKST), 248 to 254 (SPVPGTT), and 273 to 276 (DTAG) contribute to the GTP site. Residue S233 participates in Mg(2+) binding. K(+) contacts are provided by S248, V250, and T253. T254 is a Mg(2+) binding site. Residue K435 participates in (6S)-5-formyl-5,6,7,8-tetrahydrofolate binding.

It belongs to the TRAFAC class TrmE-Era-EngA-EngB-Septin-like GTPase superfamily. TrmE GTPase family. As to quaternary structure, homodimer. Heterotetramer of two MnmE and two MnmG subunits. Requires K(+) as cofactor.

It is found in the cytoplasm. Functionally, exhibits a very high intrinsic GTPase hydrolysis rate. Involved in the addition of a carboxymethylaminomethyl (cmnm) group at the wobble position (U34) of certain tRNAs, forming tRNA-cmnm(5)s(2)U34. The polypeptide is tRNA modification GTPase MnmE (Azorhizobium caulinodans (strain ATCC 43989 / DSM 5975 / JCM 20966 / LMG 6465 / NBRC 14845 / NCIMB 13405 / ORS 571)).